Here is a 50-residue protein sequence, read N- to C-terminus: MAYGTEYENDAMIEIKCPFKEATLLMKVRKSNSNLDILIRTKNIKKFSNK.

This is an uncharacterized protein from Dictyostelium discoideum (Social amoeba).